Consider the following 126-residue polypeptide: Glycerol dehydrogenase small subunit (126 aa).

The next 4 helical transmembrane spans lie at 13-33 (WLTL…VIAG), 41-61 (GSVY…FMLM), 67-87 (AFLY…EVGF), and 92-112 (LLPR…TIPV).

Its subcellular location is the cell membrane. It carries out the reaction glycerol + A = dihydroxyacetone + AH2. Catalyzes the oxidation of glycerol to glycerone. Also acts, more slowly, on a number of other polyols including D-sorbitol, D-arabinitol, D-mannitol, meso-erythritol, adonitol and propylene glycol. This chain is Glycerol dehydrogenase small subunit (sldB), found in Gluconobacter oxydans (strain 621H) (Gluconobacter suboxydans).